Reading from the N-terminus, the 260-residue chain is NAD-capped RNA hydrolase NudC (260 aa).

Residues Lys-25 and Arg-69 each contribute to the substrate site. Positions 98 and 101 each coordinate Zn(2+). Glu-111 contributes to the substrate binding site. The Zn(2+) site is built by Cys-116 and Cys-119. Tyr-124 is a substrate binding site. The Nudix hydrolase domain maps to 125–248 (PQIAPCVIVA…TVARRLIEDT (124 aa)). A divalent metal cation is bound by residues Ala-158, Glu-174, and Glu-178. The short motif at 159–180 (GFVEVGETLEQAVSREVLEESN) is the Nudix box element. 192-199 (QPWPFPHS) contributes to the substrate binding site. Glu-219 lines the a divalent metal cation pocket. Ala-241 is a substrate binding site.

Belongs to the Nudix hydrolase family. NudC subfamily. As to quaternary structure, homodimer. The cofactor is Mg(2+). Mn(2+) serves as cofactor. Zn(2+) is required as a cofactor.

It carries out the reaction a 5'-end NAD(+)-phospho-ribonucleoside in mRNA + H2O = a 5'-end phospho-adenosine-phospho-ribonucleoside in mRNA + beta-nicotinamide D-ribonucleotide + 2 H(+). It catalyses the reaction NAD(+) + H2O = beta-nicotinamide D-ribonucleotide + AMP + 2 H(+). The enzyme catalyses NADH + H2O = reduced beta-nicotinamide D-ribonucleotide + AMP + 2 H(+). MRNA decapping enzyme that specifically removes the nicotinamide adenine dinucleotide (NAD) cap from a subset of mRNAs by hydrolyzing the diphosphate linkage to produce nicotinamide mononucleotide (NMN) and 5' monophosphate mRNA. The NAD-cap is present at the 5'-end of some mRNAs and stabilizes RNA against 5'-processing. Has preference for mRNAs with a 5'-end purine. Catalyzes the hydrolysis of a broad range of dinucleotide pyrophosphates. The chain is NAD-capped RNA hydrolase NudC from Yersinia pseudotuberculosis serotype O:1b (strain IP 31758).